Here is a 288-residue protein sequence, read N- to C-terminus: ATP synthase gamma chain (288 aa).

This sequence belongs to the ATPase gamma chain family. In terms of assembly, F-type ATPases have 2 components, CF(1) - the catalytic core - and CF(0) - the membrane proton channel. CF(1) has five subunits: alpha(3), beta(3), gamma(1), delta(1), epsilon(1). CF(0) has three main subunits: a, b and c.

The protein localises to the cell inner membrane. Its function is as follows. Produces ATP from ADP in the presence of a proton gradient across the membrane. The gamma chain is believed to be important in regulating ATPase activity and the flow of protons through the CF(0) complex. The protein is ATP synthase gamma chain of Rickettsia typhi (strain ATCC VR-144 / Wilmington).